Reading from the N-terminus, the 506-residue chain is Maturase K (506 aa).

This sequence belongs to the intron maturase 2 family. MatK subfamily.

It is found in the plastid. It localises to the chloroplast. Its function is as follows. Usually encoded in the trnK tRNA gene intron. Probably assists in splicing its own and other chloroplast group II introns. The protein is Maturase K of Andromeda polifolia (Bog rosemary).